We begin with the raw amino-acid sequence, 303 residues long: Proteasome subunit beta (303 aa).

Positions 1-67 (MTWQFPDRLS…SGGTGQLPHG (67 aa)) are cleaved as a propeptide — removed in mature form; by autocatalysis. Residue Thr-68 is the Nucleophile of the active site.

This sequence belongs to the peptidase T1B family. In terms of assembly, the 20S proteasome core is composed of 14 alpha and 14 beta subunits that assemble into four stacked heptameric rings, resulting in a barrel-shaped structure. The two inner rings, each composed of seven catalytic beta subunits, are sandwiched by two outer rings, each composed of seven alpha subunits. The catalytic chamber with the active sites is on the inside of the barrel. Has a gated structure, the ends of the cylinder being occluded by the N-termini of the alpha-subunits. Is capped by the proteasome-associated ATPase, ARC.

It localises to the cytoplasm. It catalyses the reaction Cleavage of peptide bonds with very broad specificity.. It participates in protein degradation; proteasomal Pup-dependent pathway. Its activity is regulated as follows. The formation of the proteasomal ATPase ARC-20S proteasome complex, likely via the docking of the C-termini of ARC into the intersubunit pockets in the alpha-rings, may trigger opening of the gate for substrate entry. Interconversion between the open-gate and close-gate conformations leads to a dynamic regulation of the 20S proteasome proteolysis activity. Functionally, component of the proteasome core, a large protease complex with broad specificity involved in protein degradation. In Mycobacterium avium (strain 104), this protein is Proteasome subunit beta.